Here is a 658-residue protein sequence, read N- to C-terminus: DNA mismatch repair protein MutL (658 aa).

Disordered regions lie at residues R114–A137 and R437–D456. Positions P442–D456 are enriched in polar residues.

The protein belongs to the DNA mismatch repair MutL/HexB family.

In terms of biological role, this protein is involved in the repair of mismatches in DNA. It is required for dam-dependent methyl-directed DNA mismatch repair. May act as a 'molecular matchmaker', a protein that promotes the formation of a stable complex between two or more DNA-binding proteins in an ATP-dependent manner without itself being part of a final effector complex. The sequence is that of DNA mismatch repair protein MutL from Neisseria meningitidis serogroup B (strain ATCC BAA-335 / MC58).